Here is a 286-residue protein sequence, read N- to C-terminus: Phosphate import ATP-binding protein PstB (286 aa).

The ABC transporter domain occupies 40–281 (IAVRNLDFYY…PREQRTQEYI (242 aa)). Position 72 to 79 (72 to 79 (GPSGCGKS)) interacts with ATP.

The protein belongs to the ABC transporter superfamily. Phosphate importer (TC 3.A.1.7) family. In terms of assembly, the complex is composed of two ATP-binding proteins (PstB), two transmembrane proteins (PstC and PstA) and a solute-binding protein (PstS).

It is found in the cell inner membrane. The enzyme catalyses phosphate(out) + ATP + H2O = ADP + 2 phosphate(in) + H(+). In terms of biological role, part of the ABC transporter complex PstSACB involved in phosphate import. Responsible for energy coupling to the transport system. In Granulibacter bethesdensis (strain ATCC BAA-1260 / CGDNIH1), this protein is Phosphate import ATP-binding protein PstB.